The following is a 247-amino-acid chain: MPRFKLTLEYDGSNYAGWQRQAELHTIQSALEQAIFHFSGQQLTTTTAGRTDAGVHATGQVAHVDFIKNWQTYTVRDALNAYLQKQGEEIAVLNVQNVPDNFDARFSAIKRHYLFKILNRLSPPALNIKRVWWIPKPLNVDAMHQAAQKLVGQHDFTTFRSAHCQAKSPIRTLERLDVYREGEEIFLYAQARSFLHHQIRSFAGSLMEVGIGRWTAQDLEAALHAKDRKRCGMVAPPSGLYLTQVDY.

The active-site Nucleophile is the Asp52. Tyr113 is a binding site for substrate.

It belongs to the tRNA pseudouridine synthase TruA family. In terms of assembly, homodimer.

The catalysed reaction is uridine(38/39/40) in tRNA = pseudouridine(38/39/40) in tRNA. Its function is as follows. Formation of pseudouridine at positions 38, 39 and 40 in the anticodon stem and loop of transfer RNAs. The sequence is that of tRNA pseudouridine synthase A from Bartonella quintana (strain Toulouse) (Rochalimaea quintana).